A 249-amino-acid chain; its full sequence is Triosephosphate isomerase (249 aa).

9–11 (NWK) is a binding site for substrate. Catalysis depends on His95, which acts as the Electrophile. Glu166 acts as the Proton acceptor in catalysis. Residues Gly172, Ser211, and 232 to 233 (GG) each bind substrate.

This sequence belongs to the triosephosphate isomerase family. As to quaternary structure, homodimer.

The protein resides in the cytoplasm. The enzyme catalyses D-glyceraldehyde 3-phosphate = dihydroxyacetone phosphate. It functions in the pathway carbohydrate biosynthesis; gluconeogenesis. It participates in carbohydrate degradation; glycolysis; D-glyceraldehyde 3-phosphate from glycerone phosphate: step 1/1. Its function is as follows. Involved in the gluconeogenesis. Catalyzes stereospecifically the conversion of dihydroxyacetone phosphate (DHAP) to D-glyceraldehyde-3-phosphate (G3P). This chain is Triosephosphate isomerase, found in Legionella pneumophila subsp. pneumophila (strain Philadelphia 1 / ATCC 33152 / DSM 7513).